Here is a 728-residue protein sequence, read N- to C-terminus: 1,4-alpha-glucan branching enzyme GlgB (728 aa).

The active-site Nucleophile is Asp405. Glu458 serves as the catalytic Proton donor.

The protein belongs to the glycosyl hydrolase 13 family. GlgB subfamily. In terms of assembly, monomer.

It catalyses the reaction Transfers a segment of a (1-&gt;4)-alpha-D-glucan chain to a primary hydroxy group in a similar glucan chain.. It participates in glycan biosynthesis; glycogen biosynthesis. In terms of biological role, catalyzes the formation of the alpha-1,6-glucosidic linkages in glycogen by scission of a 1,4-alpha-linked oligosaccharide from growing alpha-1,4-glucan chains and the subsequent attachment of the oligosaccharide to the alpha-1,6 position. The polypeptide is 1,4-alpha-glucan branching enzyme GlgB (Escherichia coli O6:K15:H31 (strain 536 / UPEC)).